Consider the following 567-residue polypeptide: MGKDLFRYKGMKRILTLITCLTLIQTAAIIMQAEWLSEAVTGLFNGKGITSLLPVIGFFLIAFIARHGMTVARQKIVYQYAARTGADLRKSFLDQLFRLGPRFAKKEGTGQMVTLAMEGISQFRRYLELFLPKMVSMAIVPAAVVIYVFFQDRTSAIILVAAMPILIIFMILLGLVAQRKADRQWKSYQRLSNHFVDSLRGLETLRFLGLSKSHSKNIFYVSERYRKATMSTLRVAFLSSFALDFFTMLSVATVAVFLGLRLIDGDILLGPALTALILAPEYFLPVREVGNDYHATLNGQEAGKTIQEILSQPGFKEETPLQLEAWSDQDELKLSGVSVGRSVSDIHLSFKGKKKIGIIGASGAGKSTLIDILGGFLEPDGGMIEVNGTSRSHLQDGSWQKNLLYIPQHPYIFDDTLGNNIRFYHPSASAEDTTRAAASAGLTELVNNLPDGLEGRIGEGGRALSGGQAQRVALARAFLGNRPILLLDEPTAHLDIETEYEIKETMLDLFEDKLVFLATHRLHWMLDMDEIIVLDGGRVAEIGTHNELLEKNGVYTKLVKAQLGERA.

6 helical membrane passes run 14–34 (ILTL…MQAE), 44–64 (FNGK…IAFI), 130–150 (FLPK…YVFF), 156–176 (AIIL…LGLV), 240–260 (SFAL…FLGL), and 266–286 (DILL…FLPV). An ABC transmembrane type-1 domain is found at 17–298 (LITCLTLIQT…VGNDYHATLN (282 aa)). The region spanning 321-561 (LQLEAWSDQD…NGVYTKLVKA (241 aa)) is the ABC transporter domain. 360 to 367 (GASGAGKS) serves as a coordination point for ATP.

It belongs to the ABC transporter superfamily. Cysteine exporter (TC 3.A.1.129.1) family. As to quaternary structure, forms a heterodimer with CydD.

The protein resides in the cell membrane. The enzyme catalyses L-cysteine(in) + ATP + H2O = L-cysteine(out) + ADP + phosphate + H(+). It carries out the reaction glutathione(in) + ATP + H2O = glutathione(out) + ADP + phosphate + H(+). Functionally, part of the ABC transporter complex CydDC that exports the reduced low-molecular-weight thiols cysteine and glutathione from the cell. Export of these thiol-containing redox-active molecules may be crucial for redox homeostasis, permitting correct assembly of various respiratory complexes and formation of correct disulfide bonds in secreted proteins. CydC contains transmembrane domains (TMD), which form a pore in the membrane, and an ATP-binding domain (NBD), which is responsible for energy generation. The protein is Glutathione/L-cysteine transport system ATP-binding/permease protein CydC (cydC) of Bacillus subtilis (strain 168).